A 447-amino-acid chain; its full sequence is Cobyrinate a,c-diamide synthase (447 aa).

A GATase cobBQ-type domain is found at 252–439 (KIAIAFDESF…AHQHAVGNPY (188 aa)). Cys331 serves as the catalytic Nucleophile.

Belongs to the CobB/CbiA family. The cofactor is Mg(2+).

The enzyme catalyses cob(II)yrinate + 2 L-glutamine + 2 ATP + 2 H2O = cob(II)yrinate a,c diamide + 2 L-glutamate + 2 ADP + 2 phosphate + 2 H(+). The catalysed reaction is Ni-sirohydrochlorin + 2 L-glutamine + 2 ATP + 2 H2O = Ni-sirohydrochlorin a,c-diamide + 2 L-glutamate + 2 ADP + 2 phosphate + 2 H(+). It functions in the pathway cofactor biosynthesis; adenosylcobalamin biosynthesis; cob(II)yrinate a,c-diamide from sirohydrochlorin (anaerobic route): step 10/10. Functionally, catalyzes the ATP-dependent amidation of the two carboxylate groups at positions a and c of cobyrinate, using either L-glutamine or ammonia as the nitrogen source. Involved in the biosynthesis of the unique nickel-containing tetrapyrrole coenzyme F430, the prosthetic group of methyl-coenzyme M reductase (MCR), which plays a key role in methanogenesis and anaerobic methane oxidation. Catalyzes the ATP-dependent amidation of the two carboxylate groups at positions a and c of Ni-sirohydrochlorin, using L-glutamine or ammonia as the nitrogen source. The protein is Cobyrinate a,c-diamide synthase of Methanococcus vannielii (strain ATCC 35089 / DSM 1224 / JCM 13029 / OCM 148 / SB).